The chain runs to 501 residues: Isoflavone 3'-hydroxylase (501 aa).

A helical transmembrane segment spans residues 7 to 24 (LLSLSFIITIKILLKITS). Cysteine 439 contributes to the heme binding site.

This sequence belongs to the cytochrome P450 family. The cofactor is heme. In terms of tissue distribution, expressed constitutively in leaves and stems, but not in roots.

It is found in the endoplasmic reticulum membrane. The enzyme catalyses formononetin + reduced [NADPH--hemoprotein reductase] + O2 = calycosin + oxidized [NADPH--hemoprotein reductase] + H2O + H(+). Functionally, involved in the biosynthesis of the pterocarpin phytoalexins. Acts on isoflavones with a 4'-methoxy group on the B-ring, such as biochanin A, formononetin and 2'-hydroxyformononetin. Has a low activity with daidzein and pseudobaptigenin, and no activity with the 7-O-methylated isoflavonoids isoformononetin and prunetin. The chain is Isoflavone 3'-hydroxylase from Medicago truncatula (Barrel medic).